A 128-amino-acid chain; its full sequence is Cytochrome c-type biogenesis protein CcmE (128 aa).

The Cytoplasmic segment spans residues 1–8; the sequence is MQKRVRNR. Residues 9–29 form a helical; Signal-anchor for type II membrane protein membrane-spanning segment; that stretch reads LITIIICFCSAALGISIVLYN. Residues 30-128 are Periplasmic-facing; it reads LEKNIVFFLP…KHDENYRPPS (99 aa). The heme site is built by H120 and Y124.

This sequence belongs to the CcmE/CycJ family.

It localises to the cell inner membrane. Heme chaperone required for the biogenesis of c-type cytochromes. Transiently binds heme delivered by CcmC and transfers the heme to apo-cytochromes in a process facilitated by CcmF and CcmH. This is Cytochrome c-type biogenesis protein CcmE from Rickettsia felis (strain ATCC VR-1525 / URRWXCal2) (Rickettsia azadi).